Consider the following 1003-residue polypeptide: DNA topoisomerase 3-alpha (1003 aa).

The Toprim domain occupies 35 to 179; sequence KVLCVAEKND…NLRVLRARFS (145 aa). The 421-residue stretch at 197–617 folds into the Topo IA-type catalytic domain; sequence DQRVSDAVDV…QQVQKYKQVF (421 aa). Tyr362 functions as the O-(5'-phospho-DNA)-tyrosine intermediate in the catalytic mechanism. Positions 400–426 are disordered; it reads GGPTPRNGSKSDQAHPPIHPTKYTSGL. The C4-type zinc-finger motif lies at 658–685; it reads CPQCNKDMVLKTKKSGGFYLSCMGFPEC. 4 residues coordinate Zn(2+): Cys815, Cys817, Cys840, and Cys845. The GRF-type 1 zinc finger occupies 815 to 854; that stretch reads CNCGREAVLLTVRKQGPNQGRHFYKCSNGDCNFFLWADSS. The interval 856–888 is disordered; it reads STGGGTPTSASGPPGSSVGCPSSVGSHMDGFGS. The segment covering 862-888 has biased composition (low complexity); the sequence is PTSASGPPGSSVGCPSSVGSHMDGFGS. Positions 899, 901, 924, and 932 each coordinate Zn(2+). A GRF-type 2 zinc finger spans residues 899–941; sequence CLCGQPAVTRTVQKDGPNKGRQFHTCAKPREQQCGFFQWVDEN. The interval 946–991 is disordered; it reads SFAAPAWPGGRGKAQRPEAASKRPRAGSSDAGSTVKKPRKCSLCHQ.

The protein belongs to the type IA topoisomerase family. In terms of assembly, binds ssDNA. Interacts (via N-terminal region) with BLM; the interaction is direct. Directly interacts with RMI1. Component of the RMI complex, containing at least TOP3A, RMI1 and RMI2. The RMI complex interacts with BLM. The cofactor is Mg(2+). Highly expressed in testis.

The protein resides in the mitochondrion matrix. The catalysed reaction is ATP-independent breakage of single-stranded DNA, followed by passage and rejoining.. In terms of biological role, releases the supercoiling and torsional tension of DNA introduced during the DNA replication and transcription by transiently cleaving and rejoining one strand of the DNA duplex. Introduces a single-strand break via transesterification at a target site in duplex DNA. The scissile phosphodiester is attacked by the catalytic tyrosine of the enzyme, resulting in the formation of a DNA-(5'-phosphotyrosyl)-enzyme intermediate and the expulsion of a 3'-OH DNA strand. The free DNA strand then undergoes passage around the unbroken strand thus removing DNA supercoils. Finally, in the religation step, the DNA 3'-OH attacks the covalent intermediate to expel the active-site tyrosine and restore the DNA phosphodiester backbone. As an essential component of the RMI complex it is involved in chromosome separation and the processing of homologous recombination intermediates to limit DNA crossover formation in cells. Has DNA decatenation activity. It is required for mtDNA decatenation and segregation after completion of replication, in a process that does not require BLM, RMI1 and RMI2. The sequence is that of DNA topoisomerase 3-alpha (Top3a) from Mus musculus (Mouse).